A 217-amino-acid chain; its full sequence is Uracil phosphoribosyltransferase (217 aa).

Residues Arg-84, Arg-109, and 137-145 contribute to the 5-phospho-alpha-D-ribose 1-diphosphate site; that span reads DPMLATGGS. Residues Ile-202 and 207-209 contribute to the uracil site; that span reads GDA. Residue Asp-208 participates in 5-phospho-alpha-D-ribose 1-diphosphate binding.

The protein belongs to the UPRTase family. It depends on Mg(2+) as a cofactor.

The enzyme catalyses UMP + diphosphate = 5-phospho-alpha-D-ribose 1-diphosphate + uracil. It functions in the pathway pyrimidine metabolism; UMP biosynthesis via salvage pathway; UMP from uracil: step 1/1. Allosterically activated by GTP. Functionally, catalyzes the conversion of uracil and 5-phospho-alpha-D-ribose 1-diphosphate (PRPP) to UMP and diphosphate. This Synechococcus elongatus (strain ATCC 33912 / PCC 7942 / FACHB-805) (Anacystis nidulans R2) protein is Uracil phosphoribosyltransferase.